The chain runs to 347 residues: (RS)-norcoclaurine 6-O-methyltransferase (347 aa).

S-adenosyl-L-methionine-binding residues include Gly-192, Asp-215, Asp-235, Met-236, and Lys-249. The active-site Proton acceptor is His-253.

The protein belongs to the class I-like SAM-binding methyltransferase superfamily. Cation-independent O-methyltransferase family. COMT subfamily. In terms of assembly, homodimer.

It carries out the reaction norcoclaurine + S-adenosyl-L-methionine = coclaurine + S-adenosyl-L-homocysteine + H(+). It participates in alkaloid biosynthesis; (S)-reticuline biosynthesis; (S)-reticuline from (S)-norcoclaurine: step 1/4. Its function is as follows. Catalyzes the transfer of the S-methyl group of S-adenosyl-L-methionine (AdoMet) to the 6-hydroxyl group of norcoclaurine to form coclaurine. In Coptis japonica (Japanese goldthread), this protein is (RS)-norcoclaurine 6-O-methyltransferase.